The following is a 248-amino-acid chain: Small ribosomal subunit protein uS2 (248 aa).

Belongs to the universal ribosomal protein uS2 family.

The polypeptide is Small ribosomal subunit protein uS2 (Leptothrix cholodnii (strain ATCC 51168 / LMG 8142 / SP-6) (Leptothrix discophora (strain SP-6))).